A 696-amino-acid chain; its full sequence is DNA ligase (696 aa).

NAD(+) is bound by residues 36–40, 85–86, and Glu-123; these read DAEYD and SL. The active-site N6-AMP-lysine intermediate is the Lys-125. The NAD(+) site is built by Arg-146, Glu-181, Lys-319, and Lys-343. 4 residues coordinate Zn(2+): Cys-437, Cys-440, Cys-455, and Cys-461. A BRCT domain is found at 618 to 696; the sequence is PEGTSLAGKT…EDGLKALLGL (79 aa).

It belongs to the NAD-dependent DNA ligase family. LigA subfamily. Requires Mg(2+) as cofactor. Mn(2+) is required as a cofactor.

It catalyses the reaction NAD(+) + (deoxyribonucleotide)n-3'-hydroxyl + 5'-phospho-(deoxyribonucleotide)m = (deoxyribonucleotide)n+m + AMP + beta-nicotinamide D-nucleotide.. Functionally, DNA ligase that catalyzes the formation of phosphodiester linkages between 5'-phosphoryl and 3'-hydroxyl groups in double-stranded DNA using NAD as a coenzyme and as the energy source for the reaction. It is essential for DNA replication and repair of damaged DNA. This chain is DNA ligase, found in Bordetella bronchiseptica (strain ATCC BAA-588 / NCTC 13252 / RB50) (Alcaligenes bronchisepticus).